Reading from the N-terminus, the 728-residue chain is Catalase-peroxidase 1 (728 aa).

Positions 1 to 22 are cleaved as a signal peptide; the sequence is MDKTQSSQGKCPVMHGANSAVA. Positions 97–225 form a cross-link, tryptophyl-tyrosyl-methioninium (Trp-Tyr) (with M-251); the sequence is WHSAGTYRVA…LAAVMMGLIY (129 aa). Residue His98 is the Proton acceptor of the active site. A cross-link (tryptophyl-tyrosyl-methioninium (Tyr-Met) (with W-97)) is located at residues 225-251; the sequence is YVNPEGVDGKPDPLRTAQDVRVTFARM. His266 provides a ligand contact to heme b.

It belongs to the peroxidase family. Peroxidase/catalase subfamily. As to quaternary structure, homodimer or homotetramer. The cofactor is heme b. Formation of the three residue Trp-Tyr-Met cross-link is important for the catalase, but not the peroxidase activity of the enzyme.

The enzyme catalyses H2O2 + AH2 = A + 2 H2O. The catalysed reaction is 2 H2O2 = O2 + 2 H2O. Its function is as follows. Bifunctional enzyme with both catalase and broad-spectrum peroxidase activity. This Shewanella sp. (strain ANA-3) protein is Catalase-peroxidase 1.